A 263-amino-acid chain; its full sequence is Hydroxyethylthiazole kinase 1 (263 aa).

M42 contributes to the substrate binding site. Residues K118 and T164 each coordinate ATP. G191 lines the substrate pocket.

Belongs to the Thz kinase family. Mg(2+) serves as cofactor.

It carries out the reaction 5-(2-hydroxyethyl)-4-methylthiazole + ATP = 4-methyl-5-(2-phosphooxyethyl)-thiazole + ADP + H(+). Its pathway is cofactor biosynthesis; thiamine diphosphate biosynthesis; 4-methyl-5-(2-phosphoethyl)-thiazole from 5-(2-hydroxyethyl)-4-methylthiazole: step 1/1. Its function is as follows. Catalyzes the phosphorylation of the hydroxyl group of 4-methyl-5-beta-hydroxyethylthiazole (THZ). The polypeptide is Hydroxyethylthiazole kinase 1 (Clostridium botulinum (strain Kyoto / Type A2)).